A 417-amino-acid chain; its full sequence is Serine hydroxymethyltransferase (417 aa).

(6S)-5,6,7,8-tetrahydrofolate is bound by residues Leu-121 and 125 to 127 (GHL). Lys-230 carries the N6-(pyridoxal phosphate)lysine modification. Residue Glu-245 participates in (6S)-5,6,7,8-tetrahydrofolate binding.

This sequence belongs to the SHMT family. In terms of assembly, homodimer. Pyridoxal 5'-phosphate serves as cofactor.

The protein localises to the cytoplasm. The enzyme catalyses (6R)-5,10-methylene-5,6,7,8-tetrahydrofolate + glycine + H2O = (6S)-5,6,7,8-tetrahydrofolate + L-serine. Its pathway is one-carbon metabolism; tetrahydrofolate interconversion. It participates in amino-acid biosynthesis; glycine biosynthesis; glycine from L-serine: step 1/1. Catalyzes the reversible interconversion of serine and glycine with tetrahydrofolate (THF) serving as the one-carbon carrier. This reaction serves as the major source of one-carbon groups required for the biosynthesis of purines, thymidylate, methionine, and other important biomolecules. Also exhibits THF-independent aldolase activity toward beta-hydroxyamino acids, producing glycine and aldehydes, via a retro-aldol mechanism. This Desulfitobacterium hafniense (strain DSM 10664 / DCB-2) protein is Serine hydroxymethyltransferase.